The primary structure comprises 343 residues: Protein FAM50A-B (343 aa).

2 disordered regions span residues Met1–Arg25 and Glu125–Asn181. The segment covering Glu125–Tyr142 has biased composition (acidic residues). The span at Pro172–Asn181 shows a compositional bias: basic and acidic residues.

It belongs to the FAM50 family.

It localises to the nucleus. Probably involved in the regulation of pre-mRNA splicing. The polypeptide is Protein FAM50A-B (fam50a-b) (Xenopus laevis (African clawed frog)).